The following is a 330-amino-acid chain: RNA polymerase sigma factor RpoS (330 aa).

The tract at residues D56–A89 is sigma-70 factor domain-1. The interval M94–T164 is sigma-70 factor domain-2. An Interaction with polymerase core subunit RpoC motif is present at residues D118–E121. The sigma-70 factor domain-3 stretch occupies residues E174 to T249. Positions W262–E315 are sigma-70 factor domain-4. Residues L288–V307 constitute a DNA-binding region (H-T-H motif).

This sequence belongs to the sigma-70 factor family. RpoS subfamily. Interacts with the RNA polymerase core enzyme.

Its subcellular location is the cytoplasm. Sigma factors are initiation factors that promote the attachment of RNA polymerase to specific initiation sites and are then released. This sigma factor is the master transcriptional regulator of the stationary phase and the general stress response. In Salmonella dublin, this protein is RNA polymerase sigma factor RpoS.